The primary structure comprises 399 residues: Glutathione S-transferase LANCL1 (399 aa).

A2 carries the post-translational modification N-acetylalanine. At K142 the chain carries N6-acetyllysine. A Zn(2+)-binding site is contributed by C276. K317 provides a ligand contact to glutathione. Residues C322 and H323 each coordinate Zn(2+). 364–367 (RTAD) provides a ligand contact to glutathione.

The protein belongs to the LanC-like protein family. Interacts with the C-terminal of STOM. Interacts with the EPS8 SH3 domain. Interaction with EPS8 is inhibited by glutathione binding. In terms of tissue distribution, detected in spinal cord (at protein level). Ubiquitous. Strongly expressed in brain, testis, alveolar macrophages and epithelial cells of the lung, kidney and intestine. Expression in brain increases during the first postnatal month and remaining high in adult.

The protein localises to the cytoplasm. It localises to the cell membrane. The enzyme catalyses RX + glutathione = an S-substituted glutathione + a halide anion + H(+). It catalyses the reaction 1-chloro-2,4-dinitrobenzene + glutathione = 2,4-dinitrophenyl-S-glutathione + chloride + H(+). Its function is as follows. Functions as a glutathione transferase. Catalyzes conjugation of the glutathione (GSH) to artificial substrates 1-chloro-2,4-dinitrobenzene (CDNB) and p-nitrophenyl acetate. Mitigates neuronal oxidative stress during normal postnatal development and in response to oxidative stresses probably through GSH antioxidant defense mechanism. May play a role in EPS8 signaling. Binds glutathione. This Mus musculus (Mouse) protein is Glutathione S-transferase LANCL1.